The following is a 233-amino-acid chain: Large ribosomal subunit protein uL1 (233 aa).

Belongs to the universal ribosomal protein uL1 family. Part of the 50S ribosomal subunit.

Its function is as follows. Binds directly to 23S rRNA. The L1 stalk is quite mobile in the ribosome, and is involved in E site tRNA release. In terms of biological role, protein L1 is also a translational repressor protein, it controls the translation of the L11 operon by binding to its mRNA. The chain is Large ribosomal subunit protein uL1 from Marinomonas sp. (strain MWYL1).